The sequence spans 104 residues: Large ribosomal subunit protein bL21 (104 aa).

It belongs to the bacterial ribosomal protein bL21 family. Part of the 50S ribosomal subunit. Contacts protein L20.

Functionally, this protein binds to 23S rRNA in the presence of protein L20. This chain is Large ribosomal subunit protein bL21, found in Lactococcus lactis subsp. lactis (strain IL1403) (Streptococcus lactis).